Consider the following 116-residue polypeptide: Large ribosomal subunit protein bL19 (116 aa).

The protein belongs to the bacterial ribosomal protein bL19 family.

Functionally, this protein is located at the 30S-50S ribosomal subunit interface and may play a role in the structure and function of the aminoacyl-tRNA binding site. In Pseudomonas savastanoi pv. phaseolicola (strain 1448A / Race 6) (Pseudomonas syringae pv. phaseolicola (strain 1448A / Race 6)), this protein is Large ribosomal subunit protein bL19.